The following is a 443-amino-acid chain: C4-dicarboxylate transport protein (443 aa).

9 helical membrane-spanning segments follow: residues 17 to 37 (PFYSHLYVQVLAAIAAGILLG), 57 to 77 (LVKMVIAPVIFLTVATGIAGM), 92 to 112 (LYFLTFSTLALVIGMIVANVV), 139 to 159 (EQSIVGFLTNIIPTTIVGAFA), 161 to 181 (GDILQVLFFSVLFGIALAMVG), 201 to 221 (LVGILMKAAPIGAFGAMAFTI), 234 to 254 (MLIGTFYITSLLFVLVVLGAV), 320 to 340 (IYMTLAALFIAQATGIQLSWG), and 368 to 388 (AATLSVVPSVPVAGMALILGI).

The protein belongs to the dicarboxylate/amino acid:cation symporter (DAACS) (TC 2.A.23) family.

Its subcellular location is the cell inner membrane. In terms of biological role, responsible for the transport of dicarboxylates such as succinate, fumarate, and malate from the periplasm across the membrane. This chain is C4-dicarboxylate transport protein, found in Rhizobium etli (strain ATCC 51251 / DSM 11541 / JCM 21823 / NBRC 15573 / CFN 42).